Reading from the N-terminus, the 116-residue chain is Large ribosomal subunit protein bL17 (116 aa).

Belongs to the bacterial ribosomal protein bL17 family. Part of the 50S ribosomal subunit. Contacts protein L32.

The protein is Large ribosomal subunit protein bL17 of Helicobacter hepaticus (strain ATCC 51449 / 3B1).